The following is a 318-amino-acid chain: Probable ABC transporter permease protein MG189 (318 aa).

Helical transmembrane passes span 42 to 62 (VLGFFGLIVIFPFYLMVVVSF), 98 to 118 (AIVVNTLVTVLSVLLTLFFTI), 134 to 154 (LVWFFFLSVLILPESALLIGQ), 169 to 189 (PLIVLGLIMPFVSSVFSGFMY), 230 to 250 (VGILTAFSAWNSYLWPLLLLG), and 282 to 302 (LKMSAAILAILPMFIIYFLFH). The region spanning 99 to 301 (IVVNTLVTVL…LPMFIIYFLF (203 aa)) is the ABC transmembrane type-1 domain.

Belongs to the binding-protein-dependent transport system permease family. MalFG subfamily.

The protein localises to the cell membrane. In terms of biological role, probably part of a binding-protein-dependent transport system. Probably responsible for the translocation of the substrate across the membrane. The sequence is that of Probable ABC transporter permease protein MG189 from Mycoplasma genitalium (strain ATCC 33530 / DSM 19775 / NCTC 10195 / G37) (Mycoplasmoides genitalium).